The following is a 108-amino-acid chain: Phosphoribosyl-ATP pyrophosphatase (108 aa).

The protein belongs to the PRA-PH family.

Its subcellular location is the cytoplasm. The enzyme catalyses 1-(5-phospho-beta-D-ribosyl)-ATP + H2O = 1-(5-phospho-beta-D-ribosyl)-5'-AMP + diphosphate + H(+). It participates in amino-acid biosynthesis; L-histidine biosynthesis; L-histidine from 5-phospho-alpha-D-ribose 1-diphosphate: step 2/9. In Pelobacter propionicus (strain DSM 2379 / NBRC 103807 / OttBd1), this protein is Phosphoribosyl-ATP pyrophosphatase.